A 210-amino-acid chain; its full sequence is Putative methyltransferase ECU09_1500 (210 aa).

Belongs to the methyltransferase superfamily.

This is Putative methyltransferase ECU09_1500 from Encephalitozoon cuniculi (strain GB-M1) (Microsporidian parasite).